We begin with the raw amino-acid sequence, 391 residues long: NAD(P)H-quinone oxidoreductase subunit H, chloroplastic (391 aa).

The protein belongs to the complex I 49 kDa subunit family. NDH is composed of at least 16 different subunits, 5 of which are encoded in the nucleus.

The protein resides in the plastid. It localises to the chloroplast thylakoid membrane. The enzyme catalyses a plastoquinone + NADH + (n+1) H(+)(in) = a plastoquinol + NAD(+) + n H(+)(out). It carries out the reaction a plastoquinone + NADPH + (n+1) H(+)(in) = a plastoquinol + NADP(+) + n H(+)(out). NDH shuttles electrons from NAD(P)H:plastoquinone, via FMN and iron-sulfur (Fe-S) centers, to quinones in the photosynthetic chain and possibly in a chloroplast respiratory chain. The immediate electron acceptor for the enzyme in this species is believed to be plastoquinone. Couples the redox reaction to proton translocation, and thus conserves the redox energy in a proton gradient. The protein is NAD(P)H-quinone oxidoreductase subunit H, chloroplastic of Mesostigma viride (Green alga).